The primary structure comprises 525 residues: GMP synthase [glutamine-hydrolyzing] (525 aa).

One can recognise a Glutamine amidotransferase type-1 domain in the interval 8 to 207 (KILILDFGSQ…ALDICECEAN (200 aa)). Cys85 serves as the catalytic Nucleophile. Active-site residues include His181 and Glu183. The region spanning 208–400 (WKPTSIIEDA…LGLPYDMLYR (193 aa)) is the GMPS ATP-PPase domain. 235–241 (SGGVDSS) is a binding site for ATP.

Homodimer.

The catalysed reaction is XMP + L-glutamine + ATP + H2O = GMP + L-glutamate + AMP + diphosphate + 2 H(+). It functions in the pathway purine metabolism; GMP biosynthesis; GMP from XMP (L-Gln route): step 1/1. In terms of biological role, catalyzes the synthesis of GMP from XMP. The protein is GMP synthase [glutamine-hydrolyzing] of Shewanella sediminis (strain HAW-EB3).